Consider the following 538-residue polypeptide: Putative cysteine ligase BshC (538 aa).

Residues 460–483 (KINEQIELLEKMLKRNVEKKHEVQ) are a coiled coil.

This sequence belongs to the BshC family.

Its function is as follows. Involved in bacillithiol (BSH) biosynthesis. May catalyze the last step of the pathway, the addition of cysteine to glucosamine malate (GlcN-Mal) to generate BSH. The chain is Putative cysteine ligase BshC from Bacillus mycoides (strain KBAB4) (Bacillus weihenstephanensis).